The sequence spans 352 residues: Fructose-1,6-bisphosphatase class 1 (352 aa).

Residues E111, D133, I135, and D136 each coordinate Mg(2+). Residues D136–S139, N228, Y256, and K286 each bind substrate. E292 contributes to the Mg(2+) binding site.

The protein belongs to the FBPase class 1 family. Homotetramer. Mg(2+) serves as cofactor.

It localises to the cytoplasm. It catalyses the reaction beta-D-fructose 1,6-bisphosphate + H2O = beta-D-fructose 6-phosphate + phosphate. Its pathway is carbohydrate biosynthesis; Calvin cycle. The sequence is that of Fructose-1,6-bisphosphatase class 1 from Crocosphaera subtropica (strain ATCC 51142 / BH68) (Cyanothece sp. (strain ATCC 51142)).